The primary structure comprises 603 residues: Penicillin-binding protein activator LpoA (603 aa).

The N-terminal stretch at 1–24 (MINHKRLSVPRILTPVALAITLAA) is a signal peptide. Residue C25 is the site of N-palmitoyl cysteine attachment. The S-diacylglycerol cysteine moiety is linked to residue C25.

This sequence belongs to the LpoA family. Interacts with PBP1a.

The protein resides in the cell outer membrane. Regulator of peptidoglycan synthesis that is essential for the function of penicillin-binding protein 1A (PBP1a). This chain is Penicillin-binding protein activator LpoA, found in Vibrio antiquarius (strain Ex25).